The chain runs to 234 residues: LexA repressor (234 aa).

A disordered region spans residues 1-29 (MSDAANPEGHKRSLPGRPPGIRADSSGLT). A DNA-binding region (H-T-H motif) is located at residues 52–72 (MREIGQAVGLSSTSSVAHQLM). A disordered region spans residues 90 to 109 (YEVRGSDQAASVQPTDTAGK). Catalysis depends on for autocatalytic cleavage activity residues Ser-158 and Lys-195.

This sequence belongs to the peptidase S24 family. Homodimer.

It catalyses the reaction Hydrolysis of Ala-|-Gly bond in repressor LexA.. In terms of biological role, represses a number of genes involved in the response to DNA damage (SOS response), including recA and lexA. In the presence of single-stranded DNA, RecA interacts with LexA causing an autocatalytic cleavage which disrupts the DNA-binding part of LexA, leading to derepression of the SOS regulon and eventually DNA repair. In Streptomyces coelicolor (strain ATCC BAA-471 / A3(2) / M145), this protein is LexA repressor.